The primary structure comprises 439 residues: MSEFFKTVPVVKYEGADSSNPFAFKHYDANKMLMGKTMAEHLRVAVCYWHTFCWQGSDVFGANTFDRPWSKAASEMEAAKLKTDAAFEFFTKLGVPYYSFHDVDVSPEGRSIKEYINNFAQMVDVLQAKQEATGIKLLWGTANAFSNPRYMSGAASNPNPEIFAYAATQVFHAMNATKALKGENYVLWGGREGYETLLNTDLKRERAQLGRFMQMVVEHKYKIGFEGTLLIEPKPAEPTKHQYDYDTATVYGFLKEFGLEKEIKVNIEANHATLAGHSFHHEIATACSLGILGSVDANQGDAQLGWDTDQFPTSVEEYTLVTYEILKSGGFKTGGYMFDTKLRRQSMDLEDLFHGHIGAMDTLALSLERAVKMIEDEKLANIVDQRYAKWNDSLGADILAGKHTLQDLAEYAEKNNIDPQPVSGRQEMLENMVNGYIFK.

Catalysis depends on residues histidine 101 and aspartate 104. 7 residues coordinate Mg(2+): glutamate 232, glutamate 268, histidine 271, aspartate 296, aspartate 307, aspartate 309, and aspartate 339.

It belongs to the xylose isomerase family. As to quaternary structure, homotetramer. Mg(2+) serves as cofactor.

Its subcellular location is the cytoplasm. The catalysed reaction is alpha-D-xylose = alpha-D-xylulofuranose. The polypeptide is Xylose isomerase (Marinomonas sp. (strain MWYL1)).